Consider the following 451-residue polypeptide: MKDEQLYYFEKSPVFKAMMHFSLPMMIGTLLSVIYGILNIYFIGFLEDSHMISAISLTLPVFAILMGLGNLFDVGAGTYISRLLGAKDYSKSKFVSSFSIYGGIALGLIVILVALPFSDQIAAILGARGETLALTSNYLKVMFLSAPFVILFFILEQFARAIGAPMISMIGMLASVSLNIILDPILIFGFDLNVVGAALGTAISNVAAALFFIIYFMKNSDVVSVNIKLAKPNKEMLSEIFKIGIPAFLMSILMGFTGLVLNLFLAHYGNFAIASYGISFRLVQFPELIIMGLCEGVVPLIAYNFMSNKGRMKDVIKAVIMSIGVIFVVCMIAVFTIGHHMVGLFTTDQAIVEMATFILKVTMTSLLLNGIGFLFTGMLQATGQGRGATIMAILQGVVIIPVLFIMNALFGLTGVMWSLLIAESLCALAAMLIVYLLRDRLTVDTSELIEG.

12 helical membrane passes run 26 to 46, 52 to 72, 97 to 117, 139 to 159, 170 to 190, 194 to 214, 245 to 265, 282 to 302, 318 to 338, 355 to 375, 390 to 410, and 417 to 437; these read MIGT…IGFL, ISAI…GNLF, SFSI…ALPF, LKVM…EQFA, IGML…IFGF, VVGA…FFII, IPAF…NLFL, LVQF…PLIA, AVIM…FTIG, ATFI…GFLF, IMAI…NALF, and WSLL…VYLL.

Belongs to the multi antimicrobial extrusion (MATE) (TC 2.A.66.1) family. MepA subfamily.

The protein resides in the cell membrane. Functionally, multidrug resistance efflux protein. This is Multidrug export protein MepA (mepA) from Staphylococcus aureus (strain bovine RF122 / ET3-1).